The primary structure comprises 312 residues: DNA-directed RNA polymerase subunit alpha (312 aa).

The interval 1–226 (MIEFEKPTIT…EHLGLFTDLT (226 aa)) is alpha N-terminal domain (alpha-NTD). The tract at residues 242–312 (SDDRMLDRTI…DLGLGLKKDK (71 aa)) is alpha C-terminal domain (alpha-CTD).

This sequence belongs to the RNA polymerase alpha chain family. Homodimer. The RNAP catalytic core consists of 2 alpha, 1 beta, 1 beta' and 1 omega subunit. When a sigma factor is associated with the core the holoenzyme is formed, which can initiate transcription.

It catalyses the reaction RNA(n) + a ribonucleoside 5'-triphosphate = RNA(n+1) + diphosphate. DNA-dependent RNA polymerase catalyzes the transcription of DNA into RNA using the four ribonucleoside triphosphates as substrates. This is DNA-directed RNA polymerase subunit alpha from Streptococcus suis (strain 98HAH33).